Here is a 362-residue protein sequence, read N- to C-terminus: sn-glycerol-3-phosphate import ATP-binding protein UgpC (362 aa).

Residues 4–235 (LSFRNVKKTY…PASTFVAGFI (232 aa)) enclose the ABC transporter domain. An ATP-binding site is contributed by 37 to 44 (GPSGCGKS).

Belongs to the ABC transporter superfamily. sn-glycerol-3-phosphate importer (TC 3.A.1.1.3) family. In terms of assembly, the complex is composed of two ATP-binding proteins (UgpC), two transmembrane proteins (UgpA and UgpE) and a solute-binding protein (UgpB).

The protein resides in the cell inner membrane. The enzyme catalyses sn-glycerol 3-phosphate(out) + ATP + H2O = sn-glycerol 3-phosphate(in) + ADP + phosphate + H(+). In terms of biological role, part of the ABC transporter complex UgpBAEC involved in sn-glycerol-3-phosphate (G3P) import. Responsible for energy coupling to the transport system. This is sn-glycerol-3-phosphate import ATP-binding protein UgpC from Bordetella pertussis (strain Tohama I / ATCC BAA-589 / NCTC 13251).